A 117-amino-acid polypeptide reads, in one-letter code: Large ribosomal subunit protein bL19 (117 aa).

Belongs to the bacterial ribosomal protein bL19 family.

Functionally, this protein is located at the 30S-50S ribosomal subunit interface and may play a role in the structure and function of the aminoacyl-tRNA binding site. The protein is Large ribosomal subunit protein bL19 of Photorhabdus laumondii subsp. laumondii (strain DSM 15139 / CIP 105565 / TT01) (Photorhabdus luminescens subsp. laumondii).